The sequence spans 422 residues: Ferrochelatase, mitochondrial (422 aa).

Residues 1–53 (MLSASANMAAALRAAGALLREPLVHGSSRACQPWRCQSGAAVAATTEKVHHAK) constitute a mitochondrion transit peptide. K56 carries the post-translational modification N6-acetyllysine. R114, Y122, and S129 together coordinate protoporphyrin IX. K137 is subject to N6-succinyllysine. Residue C195 participates in [2Fe-2S] cluster binding. H229 is an active-site residue. N6-acetyllysine; alternate is present on K289. An N6-succinyllysine; alternate modification is found at K289. Residue D382 is part of the active site. Residues C402, C405, and C410 each contribute to the [2Fe-2S] cluster site. K414 is subject to N6-acetyllysine; alternate. An N6-succinyllysine; alternate modification is found at K414.

The protein belongs to the ferrochelatase family. In terms of assembly, homodimer. Homotetramer. Interaction with PGRMC1; the interaction results in decreased FECH activity. Interacts with ABCB10 and SLC25A37; this interaction forms an oligomeric complex. Forms a complex with ABCB7 and ABCB10, where a dimeric FECH bridges ABCB7 and ABCB10 homodimers; this complex may be required for cellular iron homeostasis, mitochondrial function and heme biosynthesis. Interacts with ABCB7 and ABCB10. [2Fe-2S] cluster is required as a cofactor. As to expression, erythroid and hepatic cells.

The protein localises to the mitochondrion inner membrane. It carries out the reaction heme b + 2 H(+) = protoporphyrin IX + Fe(2+). It functions in the pathway porphyrin-containing compound metabolism; protoheme biosynthesis; protoheme from protoporphyrin-IX: step 1/1. In terms of biological role, catalyzes the ferrous insertion into protoporphyrin IX. The protein is Ferrochelatase, mitochondrial of Mus musculus (Mouse).